Here is a 464-residue protein sequence, read N- to C-terminus: MIRRLLPRTLRARLTALIILSTAATLALSGVALYSALHNRLVGMSSYEMSATLAAMRTHLANVANVDDIPRKSDLWIDQLHGHQNLDLAIYDTDGRLRFATRGFVAPRPALGAPQTRVPASAAPAGATFSYLADDAPLRGGNPRTARIVVQYDGKNDHALLRAYAYTVVVIEVLAVVLTAALAYGIAMLGLSPLRRLVARAEQMSSSRLAQPLPELDTSGELKEMEHAFNAMLKRLDESFVRLSQFSSNLAHDMRTPLTNLLAEAQVALSKPRTADEYRDVIESSIDEYQRLSRMIEDMLFLARSDNAQSHLAIRTLDAAAQAERVAGYYEPMAEDADVRIVVRGKAEVRADALLYHRALSNLISNALNHAPRGSTITIECAQAADAATISVSDTGRGIEAPHRERIFERFYRVDPARHNSASGTGLGLAIVRSIMENHGGTCGVDSEPHVRTTFWLKFPAHAA.

The Periplasmic segment spans residues 1-13; it reads MIRRLLPRTLRAR. A helical membrane pass occupies residues 14–34; it reads LTALIILSTAATLALSGVALY. Residues 35–166 are Cytoplasmic-facing; it reads SALHNRLVGM…DHALLRAYAY (132 aa). Residues 167–187 form a helical membrane-spanning segment; that stretch reads TVVVIEVLAVVLTAALAYGIA. The HAMP domain occupies 188 to 241; it reads MLGLSPLRRLVARAEQMSSSRLAQPLPELDTSGELKEMEHAFNAMLKRLDESFV. The Periplasmic portion of the chain corresponds to 188–464; that stretch reads MLGLSPLRRL…FWLKFPAHAA (277 aa). Residues 249-463 enclose the Histidine kinase domain; it reads NLAHDMRTPL…TFWLKFPAHA (215 aa). His252 is subject to Phosphohistidine; by autocatalysis.

Its subcellular location is the cell inner membrane. The catalysed reaction is ATP + protein L-histidine = ADP + protein N-phospho-L-histidine.. In terms of biological role, member of the two-component regulatory system IrlR/IrlS. May be involved in invasion of eukaryotic cells and heavy-metal resistance. Probably activates IrlR by phosphorylation. In Burkholderia pseudomallei (strain K96243), this protein is Sensor protein IrlS (irlS).